The following is a 97-amino-acid chain: Aspartyl/glutamyl-tRNA(Asn/Gln) amidotransferase subunit C (97 aa).

The protein belongs to the GatC family. Heterotrimer of A, B and C subunits.

The catalysed reaction is L-glutamyl-tRNA(Gln) + L-glutamine + ATP + H2O = L-glutaminyl-tRNA(Gln) + L-glutamate + ADP + phosphate + H(+). The enzyme catalyses L-aspartyl-tRNA(Asn) + L-glutamine + ATP + H2O = L-asparaginyl-tRNA(Asn) + L-glutamate + ADP + phosphate + 2 H(+). In terms of biological role, allows the formation of correctly charged Asn-tRNA(Asn) or Gln-tRNA(Gln) through the transamidation of misacylated Asp-tRNA(Asn) or Glu-tRNA(Gln) in organisms which lack either or both of asparaginyl-tRNA or glutaminyl-tRNA synthetases. The reaction takes place in the presence of glutamine and ATP through an activated phospho-Asp-tRNA(Asn) or phospho-Glu-tRNA(Gln). In Prochlorococcus marinus (strain MIT 9211), this protein is Aspartyl/glutamyl-tRNA(Asn/Gln) amidotransferase subunit C.